Consider the following 201-residue polypeptide: Recombination protein RecR (201 aa).

The C4-type zinc-finger motif lies at 60 to 75; that stretch reads CETCGNIDTRSPCTIC. The region spanning 83–178 is the Toprim domain; that stretch reads SIIVVVADVA…KVTRLAHGVP (96 aa).

The protein belongs to the RecR family.

Its function is as follows. May play a role in DNA repair. It seems to be involved in an RecBC-independent recombinational process of DNA repair. It may act with RecF and RecO. The protein is Recombination protein RecR of Nitrobacter winogradskyi (strain ATCC 25391 / DSM 10237 / CIP 104748 / NCIMB 11846 / Nb-255).